We begin with the raw amino-acid sequence, 94 residues long: Pyrimidine/purine nucleoside phosphorylase (94 aa).

The protein belongs to the nucleoside phosphorylase PpnP family.

The catalysed reaction is a purine D-ribonucleoside + phosphate = a purine nucleobase + alpha-D-ribose 1-phosphate. The enzyme catalyses adenosine + phosphate = alpha-D-ribose 1-phosphate + adenine. It catalyses the reaction cytidine + phosphate = cytosine + alpha-D-ribose 1-phosphate. It carries out the reaction guanosine + phosphate = alpha-D-ribose 1-phosphate + guanine. The catalysed reaction is inosine + phosphate = alpha-D-ribose 1-phosphate + hypoxanthine. The enzyme catalyses thymidine + phosphate = 2-deoxy-alpha-D-ribose 1-phosphate + thymine. It catalyses the reaction uridine + phosphate = alpha-D-ribose 1-phosphate + uracil. It carries out the reaction xanthosine + phosphate = alpha-D-ribose 1-phosphate + xanthine. Catalyzes the phosphorolysis of diverse nucleosides, yielding D-ribose 1-phosphate and the respective free bases. Can use uridine, adenosine, guanosine, cytidine, thymidine, inosine and xanthosine as substrates. Also catalyzes the reverse reactions. The chain is Pyrimidine/purine nucleoside phosphorylase from Salmonella paratyphi C (strain RKS4594).